Consider the following 282-residue polypeptide: Pantothenate synthetase (282 aa).

Met-30–His-37 is an ATP binding site. His-37 (proton donor) is an active-site residue. Gln-61 is a binding site for (R)-pantoate. Beta-alanine is bound at residue Gln-61. Gly-147–Asp-150 contributes to the ATP binding site. Gln-153 contributes to the (R)-pantoate binding site. ATP-binding positions include Val-176 and Leu-184 to Arg-187.

It belongs to the pantothenate synthetase family. As to quaternary structure, homodimer.

The protein localises to the cytoplasm. It carries out the reaction (R)-pantoate + beta-alanine + ATP = (R)-pantothenate + AMP + diphosphate + H(+). Its pathway is cofactor biosynthesis; (R)-pantothenate biosynthesis; (R)-pantothenate from (R)-pantoate and beta-alanine: step 1/1. Catalyzes the condensation of pantoate with beta-alanine in an ATP-dependent reaction via a pantoyl-adenylate intermediate. This is Pantothenate synthetase from Desulfitobacterium hafniense (strain DSM 10664 / DCB-2).